The chain runs to 1612 residues: MIAEPAHFYLFGLICLCSGSRLRQEDFPPRIVEHPSDLIVSKGEPATLNCKAEGRPTPTIEWYKGGERVETDKDDPRSHRMLLPSGSLFFLRIVHGRKSRPDEGVYICVARNYLGEAVSHNASLEVAILRDDFRQNPSDVMVAVGEPAVMECQPPRGHPEPTISWKKDGSPLDDKDERITIRGGKLMITYTRKSDAGKYVCVGTNMVGERESEVAELTVLERPSFVKRPSNLAVTVDDSAEFKCEARGDPVPTVRWRKDDGELPKSRYEIRDDHTLKIRKVTAGDMGSYTCVAENMVGKAEASATLTVQEPPHFVVKPRDQVVALGRTVTFQCEATGNPQPAIFWRREGSQNLLFSYQPPQSSSRFSVSQTGDLTITNVQRSDVGYYICQTLNVAGSIITKAYLEVTDVIADRPPPVIRQGPVNQTVAVDGTLILSCVATGSPAPTILWRKDGVLVSTQDSRIKQLESGVLQIRYAKLGDTGRYTCTASTPSGEATWSAYIEVQEFGVPVQPPRPTDPNLIPSAPSKPEVTDVSKNTVTLSWQPNLNSGATPTSYIIEAFSHASGSSWQTAAENVKTETFAIKGLKPNAIYLFLVRAANAYGISDPSQISDPVKTQDVPPTSQGVDHKQVQRELGNVVLHLHNPTILSSSSVEVHWTVDQQSQYIQGYKILYRPSGASHGESEWLVFEVRTPTKNSVVIPDLRKGVNYEIKARPFFNEFQGADSEIKFAKTLEEAPSAPPRSVTVSKNDGNGTAILVTWQPPPEDTQNGMVQEYKVWCLGNETKYHINKTVDGSTFSVVIPSLVPGIRYSVEVAASTGAGPGVKSEPQFIQLDSHGNPVSPEDQVSLAQQISDVVRQPAFIAGIGAACWIILMVFSIWLYRHRKKRNGLTSTYAGIRKVPSFTFTPTVTYQRGGEAVSSGGRPGLLNISEPATQPWLADTWPNTGNNHNDCSINCCTAGNGNSDSNLTTYSRPADCIANYNNQLDNKQTNLMLPESTVYGDVDLSNKINEMKTFNSPNLKDGRFVNPSGQPTPYATTQLIQANLSNNMNNGAGDSSEKHWKPPGQQKPEVAPIQYNIMEQNKLNKDYRANDTIPPTIPYNQSYDQNTGGSYNSSDRGSSTSGSQGHKKGARTPKAPKQGGMNWADLLPPPPAHPPPHSNSEEYNMSVDESYDQEMPCPVPPAPMYLQQDELQEEEDERGPTPPVRGAASSPAAVSYSHQSTATLTPSPQEELQPMLQDCPEDLGHMPHPPDRRRQPVSPPPPPRPISPPHTYGYISGPLVSDMDTDAPEEEEDEADMEVAKMQTRRLLLRGLEQTPASSVGDLESSVTGSMINGWGSASEEDNISSGRSSVSSSDGSFFTDADFAQAVAAAAEYAGLKVARRQMQDAAGRRHFHASQCPRPTSPVSTDSNMSAVVIQKARPAKKQKHQPGHLRREAYADDLPPPPVPPPAIKSPTVQSKAQLEVRPVMVPKLASIEARTDRSSDRKGGSYKGREALDGRQVTDLRTNPSDPREAQEQPNDGKGRGTRQPKRDLPPAKTHLGQEDILPYCRPTFPTSNNPRDPSSSSSMSSRGSGSRQREQANVGRRNMAEMQVLGGFERGDENNEELEETES.

Positions 1 to 19 (MIAEPAHFYLFGLICLCSG) are cleaved as a signal peptide. Residues 20–858 (SRLRQEDFPP…QQISDVVRQP (839 aa)) are Extracellular-facing. 5 Ig-like C2-type domains span residues 29–125 (PRIV…ASLE), 131–218 (DDFR…AELT), 223–307 (PSFV…ATLT), 312–407 (PHFV…LEVT), and 416–502 (PVIR…AYIE). A disulfide bridge links Cys-50 with Cys-108. N-linked (GlcNAc...) asparagine glycosylation occurs at Asn-121. Intrachain disulfides connect Cys-152-Cys-201, Cys-244-Cys-291, and Cys-333-Cys-389. An N-linked (GlcNAc...) asparagine glycan is attached at Asn-424. Residues Cys-437 and Cys-486 are joined by a disulfide bond. Fibronectin type-III domains are found at residues 524-618 (APSK…TQDV), 637-734 (VVLH…TLEE), and 739-835 (PPRS…LDSH). N-linked (GlcNAc...) asparagine glycans are attached at residues Asn-751, Asn-781, and Asn-788. Residues 859-879 (AFIAGIGAACWIILMVFSIWL) traverse the membrane as a helical segment. The Cytoplasmic portion of the chain corresponds to 880 to 1612 (YRHRKKRNGL…NNEELEETES (733 aa)). Ser-901 carries the post-translational modification Phosphoserine. At Thr-909 the chain carries Phosphothreonine. At Tyr-999 the chain carries Phosphotyrosine. Phosphoserine is present on Ser-1016. Phosphotyrosine is present on Tyr-1034. Residues 1045-1068 (SNNMNNGAGDSSEKHWKPPGQQKP) form a disordered region. Tyr-1075 carries the post-translational modification Phosphotyrosine. Disordered stretches follow at residues 1088-1298 (RAND…ADME), 1313-1358 (EQTP…DGSF), and 1381-1612 (RRQM…ETES). The span at 1098–1107 (PYNQSYDQNT) shows a compositional bias: polar residues. Over residues 1108–1124 (GGSYNSSDRGSSTSGSQ) the composition is skewed to low complexity. Residues 1147–1157 (LPPPPAHPPPH) show a composition bias toward pro residues. A Phosphothreonine modification is found at Thr-1201. The span at 1216-1230 (YSHQSTATLTPSPQE) shows a compositional bias: polar residues. The segment covering 1242 to 1254 (DLGHMPHPPDRRR) has biased composition (basic and acidic residues). Residues 1257–1268 (VSPPPPPRPISP) are compositionally biased toward pro residues. Ser-1258 carries the post-translational modification Phosphoserine. Over residues 1283-1297 (MDTDAPEEEEDEADM) the composition is skewed to acidic residues. Residues 1345–1358 (SSGRSSVSSSDGSF) show a composition bias toward low complexity. A compositionally biased stretch (polar residues) spans 1399 to 1412 (PRPTSPVSTDSNMS). A compositionally biased stretch (basic residues) spans 1420–1431 (RPAKKQKHQPGH). Pro residues predominate over residues 1441 to 1451 (LPPPPVPPPAI). Composition is skewed to basic and acidic residues over residues 1477–1502 (ARTDRSSDRKGGSYKGREALDGRQVT) and 1510–1534 (DPREAQEQPNDGKGRGTRQPKRDLP). Positions 1553-1562 (FPTSNNPRDP) are enriched in polar residues. The span at 1563–1575 (SSSSSMSSRGSGS) shows a compositional bias: low complexity. A compositionally biased stretch (acidic residues) spans 1603–1612 (NNEELEETES).

This sequence belongs to the immunoglobulin superfamily. ROBO family. In terms of assembly, homodimer. Dimerization is mediated by the extracellular domain and is independent of SLIT liganding. Interacts with SLIT1 Interacts with SLIT2. Interacts with FLRT3. Interacts with MYO9B (via Rho-GAP domain). In terms of processing, ubiquitinated. May be deubiquitinated by USP33. As to expression, detected in embryonic thalamus neurons (at protein level). Expressed in embryonal spinal cord. Expressed in embryonal lung, and in adult lung bronchial epithelial cells of large proximal airways.

It localises to the cell membrane. The protein resides in the cell projection. The protein localises to the axon. Its subcellular location is the endoplasmic reticulum-Golgi intermediate compartment membrane. Receptor for SLIT1 and SLIT2 that mediates cellular responses to molecular guidance cues in cellular migration, including axonal navigation at the ventral midline of the neural tube and projection of axons to different regions during neuronal development. Interaction with the intracellular domain of FLRT3 mediates axon attraction towards cells expressing NTN1. In axon growth cones, the silencing of the attractive effect of NTN1 by SLIT2 may require the formation of a ROBO1-DCC complex. Plays a role in the regulation of cell migration via its interaction with MYO9B; inhibits MYO9B-mediated stimulation of RHOA GTPase activity, and thereby leads to increased levels of active, GTP-bound RHOA. May be required for lung development. This chain is Roundabout homolog 1 (Robo1), found in Mus musculus (Mouse).